A 172-amino-acid chain; its full sequence is uncharacterized protein (172 aa).

Positions 130 to 154 (EQEKGAAPQEGKDWQVISEEDKKNQ) are disordered.

This is an uncharacterized protein from Bacillus subtilis (strain 168).